A 405-amino-acid polypeptide reads, in one-letter code: Transposase from transposon Tn1545 (405 aa).

The 85-residue stretch at 79–163 (GKKMTLCQLY…SLKASFYIAI (85 aa)) folds into the Core-binding (CB) domain. The region spanning 186 to 392 (VPKTVLTEEQ…TFDSAMAEMK (207 aa)) is the Tyr recombinase domain. Active-site residues include arginine 225, lysine 264, histidine 343, arginine 346, and histidine 369. Tyrosine 379 (O-(3'-phospho-DNA)-tyrosine intermediate) is an active-site residue.

Belongs to the 'phage' integrase family.

The chain is Transposase from transposon Tn1545 (int) from Streptococcus agalactiae serotype V (strain ATCC BAA-611 / 2603 V/R).